Reading from the N-terminus, the 299-residue chain is Regucalcin (299 aa).

Residue glutamate 18 coordinates a divalent metal cation. Substrate-binding residues include arginine 101, asparagine 103, and glutamate 121. Lysine 144 is modified (N6-succinyllysine). Positions 154 and 204 each coordinate a divalent metal cation. The active-site Proton donor/acceptor is aspartate 204. N6-succinyllysine occurs at positions 244 and 253. A Phosphoserine modification is found at serine 268.

Belongs to the SMP-30/CGR1 family. In terms of assembly, monomer. The cofactor is Zn(2+). Requires Mn(2+) as cofactor. Ca(2+) is required as a cofactor. It depends on Mg(2+) as a cofactor. Co(2+) serves as cofactor. Post-translationally, the N-terminus is blocked. As to expression, detected in liver (at protein level). Hepatocytes and renal proximal tubular epithelium.

It localises to the cytoplasm. It carries out the reaction D-glucono-1,5-lactone + H2O = D-gluconate + H(+). It functions in the pathway cofactor biosynthesis; L-ascorbate biosynthesis via UDP-alpha-D-glucuronate pathway; L-ascorbate from UDP-alpha-D-glucuronate: step 3/4. Its function is as follows. Gluconolactonase with low activity towards other sugar lactones, including gulonolactone and galactonolactone. Catalyzes a key step in ascorbic acid (vitamin C) biosynthesis. Can also hydrolyze diisopropyl phosphorofluoridate and phenylacetate (in vitro). Calcium-binding protein. Modulates Ca(2+) signaling, and Ca(2+)-dependent cellular processes and enzyme activities. This is Regucalcin (Rgn) from Rattus norvegicus (Rat).